A 131-amino-acid polypeptide reads, in one-letter code: Large ribosomal subunit protein bL17 (131 aa).

Belongs to the bacterial ribosomal protein bL17 family. In terms of assembly, part of the 50S ribosomal subunit. Contacts protein L32.

This Polynucleobacter necessarius subsp. necessarius (strain STIR1) protein is Large ribosomal subunit protein bL17.